Here is a 223-residue protein sequence, read N- to C-terminus: Uracil-DNA glycosylase (223 aa).

The Proton acceptor role is filled by D67.

Belongs to the uracil-DNA glycosylase (UDG) superfamily. UNG family.

It localises to the cytoplasm. The catalysed reaction is Hydrolyzes single-stranded DNA or mismatched double-stranded DNA and polynucleotides, releasing free uracil.. Functionally, excises uracil residues from the DNA which can arise as a result of misincorporation of dUMP residues by DNA polymerase or due to deamination of cytosine. This is Uracil-DNA glycosylase from Borrelia hermsii (strain HS1 / DAH).